The following is a 199-amino-acid chain: Peroxiredoxin-1 (199 aa).

S2 carries the post-translational modification N-acetylserine. The Thioredoxin domain maps to 6 to 165 (AKIGHPAPNF…TLRLVQAFQF (160 aa)). K7 is modified (N6-acetyllysine; alternate). K7 is covalently cross-linked (Glycyl lysine isopeptide (Lys-Gly) (interchain with G-Cter in SUMO2); alternate). N6-acetyllysine is present on residues K16 and K27. At S32 the chain carries Phosphoserine. K35 carries the post-translational modification N6-acetyllysine; alternate. K35 carries the N6-succinyllysine; alternate modification. Residue C52 is the Cysteine sulfenic acid (-SOH) intermediate of the active site. At T90 the chain carries Phosphothreonine. K120 participates in a covalent cross-link: Glycyl lysine isopeptide (Lys-Gly) (interchain with G-Cter in SUMO2). K136 is modified (N6-acetyllysine). Positions 176–199 (GWKPGSDTIKPDVQKSKEYFSKQK) are disordered. The segment covering 184–199 (IKPDVQKSKEYFSKQK) has biased composition (basic and acidic residues). A Glycyl lysine isopeptide (Lys-Gly) (interchain with G-Cter in SUMO1) cross-link involves residue K185. K197 carries the post-translational modification N6-acetyllysine.

Belongs to the peroxiredoxin family. AhpC/Prx1 subfamily. Homodimer; disulfide-linked, upon oxidation. 5 homodimers assemble to form a ring-like decamer. Interacts with GDPD5; forms a mixed-disulfide with GDPD5. Interacts with SESN1 and SESN2. Interacts with FAM107A. In terms of processing, phosphorylated on Thr-90 during the M-phase, which leads to a decrease in enzymatic activity. Acetylation increases reducing activity and resistance to superoxidation. Deacetylated by HDAC6 which decreases reducing activity. In terms of tissue distribution, detected in heart and skeletal muscle (at protein level).

It localises to the cytoplasm. It carries out the reaction a hydroperoxide + [thioredoxin]-dithiol = an alcohol + [thioredoxin]-disulfide + H2O. Its function is as follows. Thiol-specific peroxidase that catalyzes the reduction of hydrogen peroxide and organic hydroperoxides to water and alcohols, respectively. Plays a role in cell protection against oxidative stress by detoxifying peroxides and as sensor of hydrogen peroxide-mediated signaling events. Might participate in the signaling cascades of growth factors and tumor necrosis factor-alpha by regulating the intracellular concentrations of H(2)O(2). Reduces an intramolecular disulfide bond in GDPD5 that gates the ability to GDPD5 to drive postmitotic motor neuron differentiation. In Myotis lucifugus (Little brown bat), this protein is Peroxiredoxin-1 (PRDX1).